Reading from the N-terminus, the 292-residue chain is Shikimate dehydrogenase (NADP(+)) (292 aa).

Residues serine 25–serine 27 and threonine 72 contribute to the shikimate site. Lysine 76 functions as the Proton acceptor in the catalytic mechanism. Residues asparagine 97 and aspartate 113 each contribute to the shikimate site. NADP(+) contacts are provided by residues glycine 137 to alanine 141, asparagine 161 to lysine 166, and methionine 230. Residue tyrosine 232 coordinates shikimate. An NADP(+)-binding site is contributed by glycine 254.

This sequence belongs to the shikimate dehydrogenase family. As to quaternary structure, homodimer.

It carries out the reaction shikimate + NADP(+) = 3-dehydroshikimate + NADPH + H(+). It functions in the pathway metabolic intermediate biosynthesis; chorismate biosynthesis; chorismate from D-erythrose 4-phosphate and phosphoenolpyruvate: step 4/7. Its function is as follows. Involved in the biosynthesis of the chorismate, which leads to the biosynthesis of aromatic amino acids. Catalyzes the reversible NADPH linked reduction of 3-dehydroshikimate (DHSA) to yield shikimate (SA). The polypeptide is Shikimate dehydrogenase (NADP(+)) (Shewanella sp. (strain MR-4)).